The chain runs to 432 residues: Bifunctional IPC transferase and DIPP synthase (432 aa).

Residues 3 to 225 (PERAVILAAG…RARRMLVRTA (223 aa)) form a mobA-like NTP transferase region. CTP contacts are provided by residues 9-11 (LAA), Lys-22, and Glu-113. Residue Glu-113 coordinates Mg(2+). The interval 226–426 (VKGTGDGFVS…LTLYFVVKKV (201 aa)) is CDP-alcohol phosphatidyltransferases. Transmembrane regions (helical) follow at residues 264-284 (FLLG…AGIL), 337-356 (IWYF…SYST), and 385-405 (VFLT…ALFL).

The protein in the N-terminal section; belongs to the MobA family. In the C-terminal section; belongs to the CDP-alcohol phosphatidyltransferase class-I family. Requires Mg(2+) as cofactor.

The protein resides in the membrane. It carries out the reaction 1D-myo-inositol 3-phosphate + CTP + H(+) = CDP-1L-myo-inositol + diphosphate. It catalyses the reaction CDP-1L-myo-inositol + 1D-myo-inositol 3-phosphate = bis(1L-myo-inositol) 3,1'-phosphate 1-phosphate + CMP + H(+). In terms of biological role, involved in biosynthesis of di-myo-inositol phosphate (DIP), a widespread organic solute in microorganisms adapted to hot environments. Catalyzes the condensation of CTP and L-myo-inositol-1-phosphate into CDP-L-myo-inositol, as well as the biosynthesis of di-myo-inositol-1,3'-phosphate-1'-phosphate (DIPP) from CDP-L-myo-inositol and L-myo-inositol-1-phosphate. This Thermococcus kodakarensis (strain ATCC BAA-918 / JCM 12380 / KOD1) (Pyrococcus kodakaraensis (strain KOD1)) protein is Bifunctional IPC transferase and DIPP synthase.